We begin with the raw amino-acid sequence, 153 residues long: Phosphatase NudJ (153 aa).

In terms of domain architecture, Nudix hydrolase spans 3-131 (KPHVTVACVV…LVAESIRCYQ (129 aa)). The short motif at 36 to 57 (GHLEADETLVEAAARELWEETG) is the Nudix box element.

The protein belongs to the Nudix hydrolase family. NudJ subfamily. Monomer. Mg(2+) is required as a cofactor.

This is Phosphatase NudJ (nudJ) from Escherichia coli O139:H28 (strain E24377A / ETEC).